The primary structure comprises 101 residues: Urease subunit beta (101 aa).

This sequence belongs to the urease beta subunit family. Heterotrimer of UreA (gamma), UreB (beta) and UreC (alpha) subunits. Three heterotrimers associate to form the active enzyme.

The protein localises to the cytoplasm. It catalyses the reaction urea + 2 H2O + H(+) = hydrogencarbonate + 2 NH4(+). It participates in nitrogen metabolism; urea degradation; CO(2) and NH(3) from urea (urease route): step 1/1. This is Urease subunit beta from Paraburkholderia phytofirmans (strain DSM 17436 / LMG 22146 / PsJN) (Burkholderia phytofirmans).